Here is a 539-residue protein sequence, read N- to C-terminus: DNA damage-binding protein CMR1 (539 aa).

The tract at residues 22–89 is disordered; it reads LNLPTEAKKE…ALKQEDLGGS (68 aa). Residues 27-39 are compositionally biased toward basic and acidic residues; it reads EAKKESVDPEVAP. WD repeat units follow at residues 182–223, 226–268, 316–356, 377–415, 462–505, and 508–539; these read VTKE…EPLQ, LHHA…DVLD, LGEK…TART, NSRL…LDML, GRWV…LAHL, and ALMT…YWWE.

It belongs to the WD repeat DDB2/WDR76 family.

DNA-binding protein that binds to both single- and double-stranded DNA. Binds preferentially to UV-damaged DNA. May be involved in DNA-metabolic processes. The polypeptide is DNA damage-binding protein CMR1 (Yarrowia lipolytica (strain CLIB 122 / E 150) (Yeast)).